A 171-amino-acid polypeptide reads, in one-letter code: UPF0316 protein EAT1b_0871 (171 aa).

Helical transmembrane passes span 4–24 (ILLILLLQLIYVPVLTLRTIM), 32–52 (IAGLFGTLETLIYIFALGIVF), and 57–77 (TVGMIVYAVGFGLGILLGGFV).

It belongs to the UPF0316 family.

The protein localises to the cell membrane. The protein is UPF0316 protein EAT1b_0871 of Exiguobacterium sp. (strain ATCC BAA-1283 / AT1b).